The sequence spans 83 residues: Exodeoxyribonuclease 7 small subunit (83 aa).

This sequence belongs to the XseB family. In terms of assembly, heterooligomer composed of large and small subunits.

It localises to the cytoplasm. The enzyme catalyses Exonucleolytic cleavage in either 5'- to 3'- or 3'- to 5'-direction to yield nucleoside 5'-phosphates.. Functionally, bidirectionally degrades single-stranded DNA into large acid-insoluble oligonucleotides, which are then degraded further into small acid-soluble oligonucleotides. This Sinorhizobium medicae (strain WSM419) (Ensifer medicae) protein is Exodeoxyribonuclease 7 small subunit.